We begin with the raw amino-acid sequence, 48 residues long: Large ribosomal subunit protein eL40 (48 aa).

It belongs to the eukaryotic ribosomal protein eL40 family.

This chain is Large ribosomal subunit protein eL40, found in Methanospirillum hungatei JF-1 (strain ATCC 27890 / DSM 864 / NBRC 100397 / JF-1).